We begin with the raw amino-acid sequence, 265 residues long: MQRYAVGIEFSGIQYRGWQTQQPGVASVQETIELVLSKIADEPITLHGAGRTDAGVHATNMVAHFDTNAIRPERGWIMGANSQLPKDISIQWIKQMDEEFHARFKATARRYRYVVYNAPHRPALLHKQVTHIYQKLDVQKMIKAASKFEGTHNFETFRAAACQSNQPVRHVKHCRLFEHGRYLVLDIQADGFLHHMVRNIMGCLLEIGQGMYEIDHIDAMFAAEDRKAAGITAPPDGLYFIQCYYPEQFDLPQPPLGPHWLNLPE.

The active-site Nucleophile is Asp-53. Position 111 (Tyr-111) interacts with substrate.

It belongs to the tRNA pseudouridine synthase TruA family. Homodimer.

It carries out the reaction uridine(38/39/40) in tRNA = pseudouridine(38/39/40) in tRNA. Formation of pseudouridine at positions 38, 39 and 40 in the anticodon stem and loop of transfer RNAs. The protein is tRNA pseudouridine synthase A of Acinetobacter baumannii (strain ACICU).